The following is an 84-amino-acid chain: MPSPKIQEIINELDNLMNRERKYIELVATVEYLLNLIEPSKREKFKEALYDAETVEDVYELIKAIKLQLGMQGARRYLLTLEGQ.

A coiled-coil region spans residues 5 to 31 (KIQEIINELDNLMNRERKYIELVATVE).

This is an uncharacterized protein from Methanocaldococcus jannaschii (strain ATCC 43067 / DSM 2661 / JAL-1 / JCM 10045 / NBRC 100440) (Methanococcus jannaschii).